Reading from the N-terminus, the 153-residue chain is UPF0178 protein Atu1478 (153 aa).

This sequence belongs to the UPF0178 family.

In Agrobacterium fabrum (strain C58 / ATCC 33970) (Agrobacterium tumefaciens (strain C58)), this protein is UPF0178 protein Atu1478.